The chain runs to 102 residues: Large ribosomal subunit protein uL24 (102 aa).

Belongs to the universal ribosomal protein uL24 family. As to quaternary structure, part of the 50S ribosomal subunit.

One of two assembly initiator proteins, it binds directly to the 5'-end of the 23S rRNA, where it nucleates assembly of the 50S subunit. In terms of biological role, one of the proteins that surrounds the polypeptide exit tunnel on the outside of the subunit. This Burkholderia ambifaria (strain ATCC BAA-244 / DSM 16087 / CCUG 44356 / LMG 19182 / AMMD) (Burkholderia cepacia (strain AMMD)) protein is Large ribosomal subunit protein uL24.